A 120-amino-acid chain; its full sequence is Non-specific lipid-transfer protein (120 aa).

A signal peptide spans 1 to 26 (MGVLRSSFVAMMVMYMVLATTPNAEA). 4 disulfides stabilise this stretch: Cys30–Cys79, Cys40–Cys56, Cys57–Cys102, and Cys77–Cys116.

The protein belongs to the plant LTP family. Expressed in protoderm cells of somatic and zygotic embryos, and transiently expressed in epidermal cell layers of leaves, flowers and seeds.

Its function is as follows. Plant non-specific lipid-transfer proteins transfer phospholipids as well as galactolipids across membranes. May play a role in wax or cutin deposition in the cell walls of expanding epidermal cells and certain secretory tissues. The chain is Non-specific lipid-transfer protein (EP2) from Daucus carota (Wild carrot).